Here is a 79-residue protein sequence, read N- to C-terminus: MAKYQVTKTLDVRGEVCPVPDVETKRALQNMKPGEILEVWIDYPMSKERIPETVKKLGHEVLEIEEVGPSEWKIYIKVK.

Catalysis depends on Cys17, which acts as the Cysteine persulfide intermediate.

Belongs to the sulfur carrier protein TusA family.

This chain is Putative sulfur carrier protein TM_0983, found in Thermotoga maritima (strain ATCC 43589 / DSM 3109 / JCM 10099 / NBRC 100826 / MSB8).